The following is a 398-amino-acid chain: Cyclic GMP-AMP synthase-like receptor (398 aa).

ATP is bound by residues Ser57 and 69–71 (EFD). Positions 69, 71, and 192 each coordinate Mg(2+). Residues Asp192 and 240–247 (SLSFQEQE) contribute to the GTP site. Residues 244–247 (QEQE), Lys265, and 277–281 (SYYIK) each bind ATP. Mn(2+) contacts are provided by Ile288, Glu289, and Asp292.

This sequence belongs to the mab-21 family. It depends on Mg(2+) as a cofactor. Mn(2+) is required as a cofactor.

The enzyme catalyses GTP + ATP = 2',3'-cGAMP + 2 diphosphate. It carries out the reaction GTP + ATP = pppGp(2'-5')A + diphosphate. It catalyses the reaction pppGp(2'-5')A = 2',3'-cGAMP + diphosphate. Its activity is regulated as follows. The enzyme activity is specifically activated by double-stranded RNA (dsRNA). Its function is as follows. Nucleotidyltransferase that catalyzes the formation of cyclic GMP-AMP (2',3'-cGAMP) from ATP and GTP and plays a key role in innate immunity. Acts as a key sensor of double-stranded RNA (dsRNA), the presence of dsRNA in the cytoplasm being a danger signal that triggers the immune responses. Directly binds dsRNA, activating the nucleotidyltransferase activity, leading to synthesis of 2',3'-cGAMP, a second messenger that binds to and activates Sting, thereby triggering the antiviral immune response via activation of the NF-kappa-B transcription factor Rel (Relish). The chain is Cyclic GMP-AMP synthase-like receptor from Tribolium castaneum (Red flour beetle).